We begin with the raw amino-acid sequence, 909 residues long: MFSSILTKVFGSRNDRTLKKLNKITEQVNQLEAQYEALSDEQLKAKTGEFQKRLQDGEDTDNLLPEAFAVVREASKRVFSMRHFDVQMLGGQVLHTGQIAEMRTGEGKTLTSTLPAYLNALSGKGVHVITVNDYLASRDAEGSRPLFEFLGLSVGCNIPGMNHAQKKEAYAADITYGTNNEFGFDYLRDNMAFSPGDRVQRELHYAIIDEVDSILIDEARTPLIISGQAEDSSELYRKINAIIPQLEQQEKEDEEGKNGDGDYTIDEKGKQVHLTEKGQIHVEEILKTSGILGEDESLFAAANISLLHHVNAALRAHKLFSRDVDYIVKGDDVVIVDEHTGRTMEGRRWSEGLHQAVEAKEGVNIQNENQTLASITFQNYFRLYDKLAGMTGTADTEAFEFQSIYGLDTVVIPTNKPMVRKDKADLIYLTAQEKYEAIVEDIKDCVKRGQPTLVGTVSIENSELISNILKKAKIPHKVLNAKFHEQEADIVAQAGKPGAVTIATNMAGRGTDIVLGGNWQVAVDGINDPKPGTVEKIKEQWQKDHDAVIEAGGLHIIGTERHESRRIDNQLRGRSGRQGDAGSSRFYLSLDDALMRIFASEKMGNMMKRLGMERGEAIEHPWVTRAIENAQRKVEGRNFDMRKQLLEFDDVANDQRKVIYEQRNELLDEGDIYSTIEAIRIDVVDSIISQYIPPQSLSEMWNVSGLEEHFKSEFLLDIPLQKWIDEDDKLYEEKIRERILEEVNNAYKAKEDIVGPDVLRQFEKAVMLQNLDSHWKEHLAAMDHLRQGIHLRGYAQKNPKQEYKRESFELFTEMLEALKVEVVTVLSKVQVKAESDVEAVEEQRRQADEQPKQYEHETASATQAPEQAPEAAPAARPGNALRDGPKVGRNDPCPCGSGLKYKQCHGKLS.

ATP contacts are provided by residues Gln-87 and 105-109 (GEGKT). The segment at 246-265 (LEQQEKEDEEGKNGDGDYTI) is disordered. Positions 254–265 (EEGKNGDGDYTI) are enriched in basic and acidic residues. Asp-512 serves as a coordination point for ATP. The span at 834–858 (ESDVEAVEEQRRQADEQPKQYEHET) shows a compositional bias: basic and acidic residues. Residues 834–899 (ESDVEAVEEQ…NDPCPCGSGL (66 aa)) are disordered. A compositionally biased stretch (low complexity) spans 859–875 (ASATQAPEQAPEAAPAA). The Zn(2+) site is built by Cys-893, Cys-895, Cys-904, and His-905.

The protein belongs to the SecA family. As to quaternary structure, monomer and homodimer. Part of the essential Sec protein translocation apparatus which comprises SecA, SecYEG and auxiliary proteins SecDF-YajC and YidC. Zn(2+) is required as a cofactor.

The protein resides in the cell inner membrane. It is found in the cytoplasm. It catalyses the reaction ATP + H2O + cellular proteinSide 1 = ADP + phosphate + cellular proteinSide 2.. Part of the Sec protein translocase complex. Interacts with the SecYEG preprotein conducting channel. Has a central role in coupling the hydrolysis of ATP to the transfer of proteins into and across the cell membrane, serving both as a receptor for the preprotein-SecB complex and as an ATP-driven molecular motor driving the stepwise translocation of polypeptide chains across the membrane. This Pseudoalteromonas atlantica (strain T6c / ATCC BAA-1087) protein is Protein translocase subunit SecA.